The sequence spans 913 residues: Vacuolar membrane protease (913 aa).

At 1–15 (MMANYFRSTFKFRKT) the chain is on the cytoplasmic side. Residues 16–36 (TVSTLFVLTVLVISILTWFDA) form a helical membrane-spanning segment. Residues 37–364 (NKYKSNLPDD…FFVVSARQLY (328 aa)) lie on the Vacuolar side of the membrane. N117 carries an N-linked (GlcNAc...) asparagine glycan. Zn(2+)-binding residues include H152 and D164. Residue E196 is the Proton acceptor of the active site. E197, E222, and H296 together coordinate Zn(2+). A helical membrane pass occupies residues 365-385 (VWNIVLLCVLPITLILLRIVC). Over 386–394 (NKLGTWRMP) the chain is Cytoplasmic. The helical transmembrane segment at 395-415 (TSALFTRIPFALFVSSFTIYF) threads the bilayer. Topologically, residues 416–431 (TKELLLQLNPTIWSRN) are vacuolar. Residues 432-452 (FILPFLFCISEFLLINTLVLA) traverse the membrane as a helical segment. The Cytoplasmic portion of the chain corresponds to 453–465 (LFEYLWPIQDFKT). Residues 466-486 (LSLLELSAIAWLFLLKCTWDL) form a helical membrane-spanning segment. Residues 487–494 (SSSGFKAT) lie on the Vacuolar side of the membrane. A helical membrane pass occupies residues 495 to 515 (GVYPVTVFYLFISLASMFGLC). Topologically, residues 516 to 600 (SMCFGKRPNA…TLNYDWSAQY (85 aa)) are cytoplasmic. Over residues 540 to 552 (NDTHSIECPRQPE) the composition is skewed to basic and acidic residues. A disordered region spans residues 540-578 (NDTHSIECPRQPEDSETTETSPLINTPSSSVQSSPIASS). Residues 557–566 (TETSPLINTP) are compositionally biased toward polar residues. Residues 567 to 578 (SSSVQSSPIASS) are compositionally biased toward low complexity. The helical transmembrane segment at 601–621 (LLAVPINAFLIWESLFNLFDA) threads the bilayer. At 622-634 (LSMTVQESNKATE) the chain is on the vacuolar side. The chain crosses the membrane as a helical span at residues 635–655 (AVFKFAIYGAIFLCSPLLPFT). Topologically, residues 656–660 (TKLNR) are cytoplasmic. A helical membrane pass occupies residues 661 to 681 (FVVIILGVVTILAASFSLFAA). The Vacuolar portion of the chain corresponds to 682 to 913 (PYTELAPLKL…MVTIHKYLEL (232 aa)). N-linked (GlcNAc...) asparagine glycans are attached at residues N729, N794, and N810.

Belongs to the peptidase M28 family. Zn(2+) serves as cofactor.

The protein resides in the vacuole membrane. Functionally, may be involved in vacuolar sorting and osmoregulation. In Kluyveromyces lactis (strain ATCC 8585 / CBS 2359 / DSM 70799 / NBRC 1267 / NRRL Y-1140 / WM37) (Yeast), this protein is Vacuolar membrane protease.